A 142-amino-acid polypeptide reads, in one-letter code: Nucleoside diphosphate kinase (142 aa).

Positions 11, 59, 87, 93, 104, and 114 each coordinate ATP. H117 functions as the Pros-phosphohistidine intermediate in the catalytic mechanism.

Belongs to the NDK family. As to quaternary structure, homotetramer. Mg(2+) serves as cofactor.

It localises to the cytoplasm. The catalysed reaction is a 2'-deoxyribonucleoside 5'-diphosphate + ATP = a 2'-deoxyribonucleoside 5'-triphosphate + ADP. It catalyses the reaction a ribonucleoside 5'-diphosphate + ATP = a ribonucleoside 5'-triphosphate + ADP. Functionally, major role in the synthesis of nucleoside triphosphates other than ATP. The ATP gamma phosphate is transferred to the NDP beta phosphate via a ping-pong mechanism, using a phosphorylated active-site intermediate. This Pectobacterium carotovorum subsp. carotovorum (strain PC1) protein is Nucleoside diphosphate kinase.